The following is a 515-amino-acid chain: ATP synthase subunit alpha (515 aa).

Position 171-178 (171-178 (GDRQTGKT)) interacts with ATP.

It belongs to the ATPase alpha/beta chains family. F-type ATPases have 2 components, CF(1) - the catalytic core - and CF(0) - the membrane proton channel. CF(1) has five subunits: alpha(3), beta(3), gamma(1), delta(1), epsilon(1). CF(0) has three main subunits: a(1), b(2) and c(9-12). The alpha and beta chains form an alternating ring which encloses part of the gamma chain. CF(1) is attached to CF(0) by a central stalk formed by the gamma and epsilon chains, while a peripheral stalk is formed by the delta and b chains.

It is found in the cell inner membrane. It catalyses the reaction ATP + H2O + 4 H(+)(in) = ADP + phosphate + 5 H(+)(out). Functionally, produces ATP from ADP in the presence of a proton gradient across the membrane. The alpha chain is a regulatory subunit. In Xanthomonas axonopodis pv. citri (strain 306), this protein is ATP synthase subunit alpha.